The following is a 1235-amino-acid chain: DNA polymerase catalytic subunit (1235 aa).

2 disordered regions span residues 640-691 (QGRF…ETAG) and 1098-1134 (AAAPGDEPAPPAALPSPAKRPRETPSPADPPGGASKP). Residues 650–661 (APKRPAAAREDE) are compositionally biased toward basic and acidic residues. Acidic residues predominate over residues 662-675 (ERPEEEGEDEDERE). Over residues 676–691 (EGGGEREPDGARETAG) the composition is skewed to basic and acidic residues.

This sequence belongs to the DNA polymerase type-B family. In terms of assembly, forms a complex with the ssDNA-binding protein UL29, the DNA polymerase processivity factor, and the alkaline exonuclease. Interacts with the putative helicase-primase complex subunit UL8; this interaction may coordinate leading and lagging strand DNA synthesis at the replication fork.

The protein resides in the host nucleus. The enzyme catalyses DNA(n) + a 2'-deoxyribonucleoside 5'-triphosphate = DNA(n+1) + diphosphate. The catalysed reaction is Endonucleolytic cleavage to 5'-phosphomonoester.. Its function is as follows. Replicates viral genomic DNA. The replication complex is composed of six viral proteins: the DNA polymerase, processivity factor, primase, primase-associated factor, helicase, and ssDNA-binding protein. Additionally, the polymerase contains an intrinsic ribonuclease H (RNase H) activity that specifically degrades RNA/DNA heteroduplexes or duplex DNA substrates in the 5' to 3' direction. Therefore, it can catalyze the excision of the RNA primers that initiate the synthesis of Okazaki fragments at a replication fork during viral DNA replication. The protein is DNA polymerase catalytic subunit of Homo sapiens (Human).